A 186-amino-acid chain; its full sequence is Large ribosomal subunit protein uL22 (186 aa).

A Phosphoserine modification is found at serine 158. The interval 159–186 is disordered; it reads KATDDEPAKKKLSKKKLQRQKEKMLRSE. Threonine 161 carries the post-translational modification Phosphothreonine. Residues 177-186 are compositionally biased toward basic and acidic residues; that stretch reads RQKEKMLRSE.

Belongs to the universal ribosomal protein uL22 family.

This chain is Large ribosomal subunit protein uL22 (RpL17), found in Drosophila melanogaster (Fruit fly).